A 307-amino-acid chain; its full sequence is uncharacterized protein (307 aa).

The 58-residue stretch at 11-68 (IRLRHLHTFVAVAQQGTLGRAAETLNLSQPALSKTLNELEQLTGARLFERGRQGAQLT) folds into the HTH lysR-type domain. The H-T-H motif DNA-binding region spans 28-47 (LGRAAETLNLSQPALSKTLN).

The protein belongs to the LysR transcriptional regulatory family.

This is an uncharacterized protein from Escherichia coli (strain K12).